Reading from the N-terminus, the 435-residue chain is ATP-dependent protease ATPase subunit HslU (435 aa).

ATP contacts are provided by residues I18, 60–65 (GVGKTE), D248, E313, and R385.

The protein belongs to the ClpX chaperone family. HslU subfamily. A double ring-shaped homohexamer of HslV is capped on each side by a ring-shaped HslU homohexamer. The assembly of the HslU/HslV complex is dependent on binding of ATP.

The protein resides in the cytoplasm. Functionally, ATPase subunit of a proteasome-like degradation complex; this subunit has chaperone activity. The binding of ATP and its subsequent hydrolysis by HslU are essential for unfolding of protein substrates subsequently hydrolyzed by HslV. HslU recognizes the N-terminal part of its protein substrates and unfolds these before they are guided to HslV for hydrolysis. The polypeptide is ATP-dependent protease ATPase subunit HslU (Roseobacter denitrificans (strain ATCC 33942 / OCh 114) (Erythrobacter sp. (strain OCh 114))).